The sequence spans 628 residues: Chaperone protein HtpG (628 aa).

Positions 1–339 are a; substrate-binding; it reads MSNNQQTLGF…SNDLPLNVSR (339 aa). The b stretch occupies residues 340–556; sequence EILQDNKTTA…NDQMTTQMAK (217 aa). Residues 557-628 are c; that stretch reads LFAMSGQPVP…IKRVNTLLAG (72 aa).

The protein belongs to the heat shock protein 90 family. Homodimer.

The protein localises to the cytoplasm. In terms of biological role, molecular chaperone. Has ATPase activity. This is Chaperone protein HtpG from Actinobacillus succinogenes (strain ATCC 55618 / DSM 22257 / CCUG 43843 / 130Z).